Here is a 105-residue protein sequence, read N- to C-terminus: DNA-directed RNA polymerase subunit omega (105 aa).

Belongs to the RNA polymerase subunit omega family. The RNAP catalytic core consists of 2 alpha, 1 beta, 1 beta' and 1 omega subunit. When a sigma factor is associated with the core the holoenzyme is formed, which can initiate transcription.

It carries out the reaction RNA(n) + a ribonucleoside 5'-triphosphate = RNA(n+1) + diphosphate. Promotes RNA polymerase assembly. Latches the N- and C-terminal regions of the beta' subunit thereby facilitating its interaction with the beta and alpha subunits. In Streptococcus pyogenes serotype M12 (strain MGAS2096), this protein is DNA-directed RNA polymerase subunit omega.